Consider the following 179-residue polypeptide: Protein GrpE (179 aa).

The segment covering 1–10 has biased composition (basic and acidic residues); the sequence is MSKKEEKQEE. Positions 1–23 are disordered; the sequence is MSKKEEKQEELQEEMEAVDAAGV.

It belongs to the GrpE family. As to quaternary structure, homodimer.

It localises to the cytoplasm. Its function is as follows. Participates actively in the response to hyperosmotic and heat shock by preventing the aggregation of stress-denatured proteins, in association with DnaK and GrpE. It is the nucleotide exchange factor for DnaK and may function as a thermosensor. Unfolded proteins bind initially to DnaJ; upon interaction with the DnaJ-bound protein, DnaK hydrolyzes its bound ATP, resulting in the formation of a stable complex. GrpE releases ADP from DnaK; ATP binding to DnaK triggers the release of the substrate protein, thus completing the reaction cycle. Several rounds of ATP-dependent interactions between DnaJ, DnaK and GrpE are required for fully efficient folding. The protein is Protein GrpE of Enterococcus faecalis (strain ATCC 700802 / V583).